The sequence spans 104 residues: SOSS complex subunit C (104 aa).

Residue Ala2 is modified to N-acetylalanine. Ser50 carries the phosphoserine modification.

The protein belongs to the SOSS-C family. Component of the SOSS complex, composed of SOSS-B (SOSS-B1/NABP2 or SOSS-B2/NABP1), SOSS-A/INTS3 and SOSS-C/INIP. SOSS complexes containing SOSS-B1/NABP2 are more abundant than complexes containing SOSS-B2/NABP1. Interacts with INTS3; the interaction is direct.

It localises to the nucleus. Component of the SOSS complex, a multiprotein complex that functions downstream of the MRN complex to promote DNA repair and G2/M checkpoint. The SOSS complex associates with single-stranded DNA at DNA lesions and influences diverse endpoints in the cellular DNA damage response including cell-cycle checkpoint activation, recombinational repair and maintenance of genomic stability. Required for efficient homologous recombination-dependent repair of double-strand breaks (DSBs) and ATM-dependent signaling pathways. The polypeptide is SOSS complex subunit C (Inip) (Mus musculus (Mouse)).